A 254-amino-acid chain; its full sequence is UPF0246 protein lpp1320 (254 aa).

Belongs to the UPF0246 family.

This is UPF0246 protein lpp1320 from Legionella pneumophila (strain Paris).